The primary structure comprises 98 residues: Integration host factor subunit alpha (98 aa).

This sequence belongs to the bacterial histone-like protein family. In terms of assembly, heterodimer of an alpha and a beta chain.

In terms of biological role, this protein is one of the two subunits of integration host factor, a specific DNA-binding protein that functions in genetic recombination as well as in transcriptional and translational control. The chain is Integration host factor subunit alpha from Actinobacillus pleuropneumoniae serotype 5b (strain L20).